Reading from the N-terminus, the 134-residue chain is Endoribonuclease YbeY (134 aa).

Residues H94, H98, and H104 each contribute to the Zn(2+) site.

The protein belongs to the endoribonuclease YbeY family. Zn(2+) serves as cofactor.

It is found in the cytoplasm. In terms of biological role, single strand-specific metallo-endoribonuclease involved in late-stage 70S ribosome quality control and in maturation of the 3' terminus of the 16S rRNA. This Campylobacter fetus subsp. fetus (strain 82-40) protein is Endoribonuclease YbeY.